A 1230-amino-acid polypeptide reads, in one-letter code: DNA-directed RNA polymerase, mitochondrial (1230 aa).

The transit peptide at 1–41 (MSALCWGRGAAGLKRALRPCGRPGLPGKEGTAGGVCGPRRS) directs the protein to the mitochondrion. 3 disordered regions span residues 18 to 55 (RPCGRPGLPGKEGTAGGVCGPRRSSSASPQEQDQDRRK), 95 to 115 (GSGDGSLQPPRKVQMGAKDAT), and 731 to 750 (VPAPPSEAPQPPEAHLPHSA). A compositionally biased stretch (pro residues) spans 732–744 (PAPPSEAPQPPEA). Positions 802 to 1230 (FRGRTYPCPP…QVKRSTYFFS (429 aa)) are mediates interaction with TEFM. Residues Asp922, Lys991, and Asp1151 contribute to the active site.

Belongs to the phage and mitochondrial RNA polymerase family. In terms of assembly, homodimer. Component of the mitochondrial transcription initiation complex, composed at least of TFB2M, TFAM and POLRMT. In this complex TFAM recruits POLRMT to the promoter whereas TFB2M induces structural changes in POLRMT to enable promoter opening and trapping of the DNA non-template strand. Upon metabolic stress, forms a complex composed of FOXO3, SIRT3 and mitochondrial RNA polymerase POLRMT; the complex is recruited to mtDNA in a SIRT3-dependent manner. Also forms a complex composed of FOXO3, SIRT3, TFAM and POLRMT. Interacts with TFB1M and TFB2M, leading to the stimulation of transcription. Interacts with TEFM. Interacts with MTRES1.

It is found in the mitochondrion. It catalyses the reaction RNA(n) + a ribonucleoside 5'-triphosphate = RNA(n+1) + diphosphate. Functionally, DNA-dependent RNA polymerase catalyzes the transcription of mitochondrial DNA into RNA using the four ribonucleoside triphosphates as substrates. Component of the mitochondrial transcription initiation complex, composed at least of TFB2M, TFAM and POLRMT that is required for basal transcription of mitochondrial DNA. In this complex, TFAM recruits POLRMT to a specific promoter whereas TFB2M induces structural changes in POLRMT to enable promoter opening and trapping of the DNA non-template strand. Has DNA primase activity. Catalyzes the synthesis of short RNA primers that are necessary for the initiation of lagging-strand DNA synthesis from the origin of light-strand DNA replication (OriL). This is DNA-directed RNA polymerase, mitochondrial from Homo sapiens (Human).